Here is a 560-residue protein sequence, read N- to C-terminus: Portal protein (560 aa).

Residues 526–560 are disordered; that stretch reads KVQADETGNYSGSDVSPLKFKPETLPFSGSTDDSI.

It belongs to the Tevenvirinae portal protein family. As to quaternary structure, homododecamer. Interacts with the large terminase subunit. Interacts with the major capsid protein. Interacts with the capsid vertex protein.

It is found in the virion. Its function is as follows. Forms the portal vertex of the capsid. This portal plays critical roles in head assembly, genome packaging, neck/tail attachment, and genome ejection. The portal protein multimerizes as a single ring-shaped homododecamer arranged around a central channel. Binds to the terminase subunits to form the packaging machine. This chain is Portal protein, found in Salmonella typhi.